Here is a 61-residue protein sequence, read N- to C-terminus: UPF0434 protein PST_2635 (61 aa).

The protein belongs to the UPF0434 family.

This chain is UPF0434 protein PST_2635, found in Stutzerimonas stutzeri (strain A1501) (Pseudomonas stutzeri).